The chain runs to 132 residues: MVKNQAQKRGVKRKQVKNIPSGVVHVKATFNNTIVTITDPAGNVISWASAGKVGYSGSRKSSAFAATVAAQDAAKAAMSSGLKEVEVGLKGTGAGRESAVRALISSGLIVSVIRDETPVPHNGCRPRKRRRV.

Belongs to the universal ribosomal protein uS11 family. As to quaternary structure, part of the 30S ribosomal subunit. Interacts with proteins S7 and S18. Binds to IF-3.

Functionally, located on the platform of the 30S subunit, it bridges several disparate RNA helices of the 16S rRNA. Forms part of the Shine-Dalgarno cleft in the 70S ribosome. The chain is Small ribosomal subunit protein uS11 from Chlamydia trachomatis serovar L2 (strain ATCC VR-902B / DSM 19102 / 434/Bu).